The sequence spans 32 residues: SDQGDVAEPKMHKTAPPFDFEAIPEEYLDDES.

A disordered region spans residues 1-32; that stretch reads SDQGDVAEPKMHKTAPPFDFEAIPEEYLDDES. A contains the active site region spans residues 8 to 14; the sequence is EPKMHKT. An O-linked (Hex) threonine glycan is attached at T14. Residues 22–32 show a composition bias toward acidic residues; sequence AIPEEYLDDES.

As to quaternary structure, interacts with human F2 (thrombin); the interaction results in thrombin inhibition.

The protein localises to the secreted. In terms of biological role, thrombin inhibitor. Does not inhibit other serine proteases. The protein is Variegin of Amblyomma variegatum (Tropical bont tick).